We begin with the raw amino-acid sequence, 166 residues long: MSAEPSQFNKLLTKYDFKLASASEEYRNRRKRQMMLFMGSAAITIFTSRLAYKSTITRQYVPSLFQGNHAPPLSYNFTSDAAVAVGTGTLLCGSVSSMVIFGTCWIIDVSNFQEFGWKMKSLMGGYEKQKELAKLPMDEESAFLQDSLNDILDGKYDFDETTPAEK.

2 consecutive transmembrane segments (helical) span residues 35 to 52 and 81 to 103; these read MLFM…RLAY and AAVA…IFGT.

This sequence belongs to the AIM11 family.

The protein localises to the membrane. The sequence is that of Altered inheritance of mitochondria protein 11 (AIM11) from Debaryomyces hansenii (strain ATCC 36239 / CBS 767 / BCRC 21394 / JCM 1990 / NBRC 0083 / IGC 2968) (Yeast).